A 378-amino-acid polypeptide reads, in one-letter code: Cell death-related nuclease 6 (378 aa).

The signal sequence occupies residues 1-17 (MIRQIILIVSLIGISNA). Residues Asn51, Asn92, and Asn111 are each glycosylated (N-linked (GlcNAc...) asparagine).

The protein belongs to the DNase II family.

Involved in apoptotic DNA degradation. The sequence is that of Cell death-related nuclease 6 (crn-6) from Caenorhabditis elegans.